Here is a 236-residue protein sequence, read N- to C-terminus: MTRRYWNINLEEMLEAGVHFGHGTRKWNPRMAPFISAKRKGIHITNLTRTARFLSEACDLVFDAASKGKHFLIVGTKNKAADLVASAAIKARCHFVNKKWLGGMLTNWSTTETRLQKFRDLRAEQRMGKLNSLPKRDAAMLKRQLSTLQTYLGGIKYMTGLPDIVIIVDQQEEYTALRECVILGIPTICLIDTNCDPDIADISIPANDDAIASIRLILNKLVSAIIDGRSSYIRNH.

This sequence belongs to the universal ribosomal protein uS2 family.

It is found in the plastid. The protein localises to the chloroplast. In Lemna minor (Common duckweed), this protein is Small ribosomal subunit protein uS2c (rps2).